Consider the following 393-residue polypeptide: MFKDYSREKFAKENFPDLSKHNNVMASHLTYELYEKYWDKVTPNGVTLDKCIQTGVDNPGNKFYGKKTGCVFGDEHSYETFKDFFDRVIEEIHHFKPEDVHPATDLDETKLVGGVFDEKYVKSCRIRCGRSVRGVCLPPAMSRAERRLVEKVVSNALGGLKEDLAGKYFPLTTMNDKDMEALIEDHFLFEKPTGALLTTSGCARDWPDGRGIWHNNGKNFLVWINEEDHIRIISMQKGGDMRAVFSRFGRGLTEVERLMKEKGYELMRNERLGYICTCPTNLGTVVRASVHLRLANLEKDKRFDDFLAKLRLGKRGTGGESSLAEDSTYDISNLARLGKSERELVQVLVDGVNVLIEADKRLEAGKPIDDLTPRLNSSTGTSISATASRHMTL.

Positions 7 to 94 (REKFAKENFP…FDRVIEEIHH (88 aa)) constitute a Phosphagen kinase N-terminal domain. In terms of domain architecture, Phosphagen kinase C-terminal spans 120-362 (YVKSCRIRCG…NVLIEADKRL (243 aa)). ATP contacts are provided by residues 123 to 127 (SCRIR), histidine 186, arginine 231, 287 to 291 (RASVH), 315 to 320 (RGTGGE), and aspartate 330. The interval 367–393 (PIDDLTPRLNSSTGTSISATASRHMTL) is disordered. The segment covering 377–393 (SSTGTSISATASRHMTL) has biased composition (low complexity).

It belongs to the ATP:guanido phosphotransferase family. In terms of assembly, monomer.

The enzyme catalyses guanidinoacetate + ATP = phosphoguanidinoacetate + ADP + H(+). The sequence is that of Glycocyamine kinase from Hediste diversicolor (Sandworm).